Consider the following 486-residue polypeptide: ATP synthase subunit beta (486 aa).

ATP is bound at residue 170–177 (GGAGVGKT).

The protein belongs to the ATPase alpha/beta chains family. As to quaternary structure, F-type ATPases have 2 components, CF(1) - the catalytic core - and CF(0) - the membrane proton channel. CF(1) has five subunits: alpha(3), beta(3), gamma(1), delta(1), epsilon(1). CF(0) has three main subunits: a(1), b(2) and c(9-12). The alpha and beta chains form an alternating ring which encloses part of the gamma chain. CF(1) is attached to CF(0) by a central stalk formed by the gamma and epsilon chains, while a peripheral stalk is formed by the delta and b chains.

The protein localises to the cell membrane. The enzyme catalyses ATP + H2O + 4 H(+)(in) = ADP + phosphate + 5 H(+)(out). Produces ATP from ADP in the presence of a proton gradient across the membrane. The catalytic sites are hosted primarily by the beta subunits. This chain is ATP synthase subunit beta, found in Kineococcus radiotolerans (strain ATCC BAA-149 / DSM 14245 / SRS30216).